The chain runs to 158 residues: RNA pyrophosphohydrolase (158 aa).

The Nudix hydrolase domain maps to 6–150; that stretch reads GYRLNVGIVL…KRDVYRKVMQ (145 aa). Residues 39–60 carry the Nudix box motif; it reads GGINIGETPEQAMYRELFEEIG.

The protein belongs to the Nudix hydrolase family. RppH subfamily. A divalent metal cation is required as a cofactor.

Accelerates the degradation of transcripts by removing pyrophosphate from the 5'-end of triphosphorylated RNA, leading to a more labile monophosphorylated state that can stimulate subsequent ribonuclease cleavage. This chain is RNA pyrophosphohydrolase, found in Blochmanniella pennsylvanica (strain BPEN).